Reading from the N-terminus, the 877-residue chain is SRP-independent targeting protein 1 (877 aa).

Residues S309, S310, S311, S332, and S334 each carry the phosphoserine modification. Disordered regions lie at residues 369–414 (LRKQ…PSND), 446–521 (DDYT…DVLS), and 550–579 (KPFN…SNHF). Residues 389–402 (RSQSYSSSNMSRSP) show a composition bias toward low complexity. Positions 412–441 (SNDELVYDELNNQINEVQDRAKNEEIVLYN) form a coiled coil. Positions 447–462 (DYTKERGEQEQDRTSY) are enriched in basic and acidic residues. Over residues 470–501 (YDDEEGGNEDNYDDDEDDDDDDDDDDESDDEG) the composition is skewed to acidic residues. 2 stretches are compositionally biased toward polar residues: residues 510-521 (LSRSGSSTDVLS) and 551-579 (PFNQ…SNHF). Residues K668 and K670 each participate in a glycyl lysine isopeptide (Lys-Gly) (interchain with G-Cter in ubiquitin) cross-link. A phosphoserine mark is found at S692, S694, and S706. The tract at residues 773–815 (SLPKEREDDNDSTNSTIVPNHPDNDNYNDNDNDNNTGINSNNF) is disordered. Low complexity predominate over residues 805–815 (DNNTGINSNNF). A Phosphoserine modification is found at S841.

Interacts with ENV10/SND2.

It is found in the cytoplasm. Functionally, functions in the SND pathway, a SRP (signal recognition particle) and GET (guided entry of tail-anchored proteins) independent pathway for targeting a broad range of substrate proteins to the endoplasmic reticulum. SND functions in parallel to GET in targeting proteins with downstream hydrophobic motifs. This chain is SRP-independent targeting protein 1, found in Saccharomyces cerevisiae (strain ATCC 204508 / S288c) (Baker's yeast).